A 175-amino-acid polypeptide reads, in one-letter code: Translation initiation factor IF-3 (175 aa).

Belongs to the IF-3 family. In terms of assembly, monomer.

The protein resides in the cytoplasm. IF-3 binds to the 30S ribosomal subunit and shifts the equilibrium between 70S ribosomes and their 50S and 30S subunits in favor of the free subunits, thus enhancing the availability of 30S subunits on which protein synthesis initiation begins. In Staphylococcus carnosus (strain TM300), this protein is Translation initiation factor IF-3.